A 222-amino-acid polypeptide reads, in one-letter code: UPF0173 metal-dependent hydrolase Mboo_0816 (222 aa).

It belongs to the UPF0173 family.

The polypeptide is UPF0173 metal-dependent hydrolase Mboo_0816 (Methanoregula boonei (strain DSM 21154 / JCM 14090 / 6A8)).